Consider the following 279-residue polypeptide: Dermonecrotic toxin LbSicTox-alphaIB1a (279 aa).

H11 is a catalytic residue. E31 and D33 together coordinate Mg(2+). Catalysis depends on H47, which acts as the Nucleophile. Disulfide bonds link C51/C57 and C53/C196. Residue D91 participates in Mg(2+) binding.

This sequence belongs to the arthropod phospholipase D family. Class II subfamily. Class IIa sub-subfamily. Mg(2+) is required as a cofactor. Expressed by the venom gland.

It is found in the secreted. It carries out the reaction an N-(acyl)-sphingosylphosphocholine = an N-(acyl)-sphingosyl-1,3-cyclic phosphate + choline. It catalyses the reaction an N-(acyl)-sphingosylphosphoethanolamine = an N-(acyl)-sphingosyl-1,3-cyclic phosphate + ethanolamine. The catalysed reaction is a 1-acyl-sn-glycero-3-phosphocholine = a 1-acyl-sn-glycero-2,3-cyclic phosphate + choline. The enzyme catalyses a 1-acyl-sn-glycero-3-phosphoethanolamine = a 1-acyl-sn-glycero-2,3-cyclic phosphate + ethanolamine. In terms of biological role, dermonecrotic toxins cleave the phosphodiester linkage between the phosphate and headgroup of certain phospholipids (sphingolipid and lysolipid substrates), forming an alcohol (often choline) and a cyclic phosphate. This toxin acts on sphingomyelin (SM) with high activity (about 30.5-31.5 U/mg). It may also act on ceramide phosphoethanolamine (CPE), lysophosphatidylcholine (LPC) and lysophosphatidylethanolamine (LPE), but not on lysophosphatidylserine (LPS), and lysophosphatidylglycerol (LPG). It acts by transphosphatidylation, releasing exclusively cyclic phosphate products as second products. Induces dermonecrosis, hemolysis, increased vascular permeability, edema, inflammatory response, and platelet aggregation. Is lethal to mice. The chain is Dermonecrotic toxin LbSicTox-alphaIB1a from Loxosceles boneti (North American fiddleback spider).